A 745-amino-acid polypeptide reads, in one-letter code: Cytoskeleton-associated protein 2-like (745 aa).

Residues 25–141 (AKGKLKSQNT…GELSRKPVGS (117 aa)) form a disordered region. The span at 30-61 (KSQNTKPYLKSKNNCQNQPPSKSTIRPKNDVT) shows a compositional bias: polar residues. Residues 109 to 120 (SSNPYSKPSSKS) are compositionally biased toward low complexity. Residues 121-133 (FQQCEAGSSTTGE) are compositionally biased toward polar residues. The KEN box signature appears at 185 to 187 (KEN). A compositionally biased stretch (basic and acidic residues) spans 192 to 203 (LTEPERKPDPKL). Disordered stretches follow at residues 192-217 (LTEP…YNQT), 256-276 (VKSQ…KPSR), and 385-411 (RFNS…NNGF). Lys198 is covalently cross-linked (Glycyl lysine isopeptide (Lys-Gly) (interchain with G-Cter in SUMO1); alternate). A Glycyl lysine isopeptide (Lys-Gly) (interchain with G-Cter in SUMO2); alternate cross-link involves residue Lys198. At Tyr204 the chain carries Phosphotyrosine. Over residues 389–411 (AIPSTPSIRPNGTSGNKHNNNGF) the composition is skewed to polar residues. At Thr742 the chain carries Phosphothreonine. Phosphoserine is present on Ser745.

Belongs to the CKAP2 family. Ubiquitinated by the anaphase promoting complex/cyclosome (APC/C).

The protein localises to the cytoplasm. The protein resides in the cytoskeleton. It is found in the spindle pole. In terms of biological role, microtubule-associated protein required for mitotic spindle formation and cell-cycle progression in neural progenitor cells. In Homo sapiens (Human), this protein is Cytoskeleton-associated protein 2-like (CKAP2L).